Consider the following 369-residue polypeptide: Protein-glutamate methylesterase/protein-glutamine glutaminase 1 (369 aa).

In terms of domain architecture, Response regulatory spans Lys3–Asp120. Asp54 is modified (4-aspartylphosphate). The span at Arg136 to Ser168 shows a compositional bias: low complexity. The disordered stretch occupies residues Arg136–Val174. Residues Gly177–Lys369 enclose the CheB-type methylesterase domain. Residues Ser189, His216, and Asp312 contribute to the active site.

This sequence belongs to the CheB family. Phosphorylated by CheA. Phosphorylation of the N-terminal regulatory domain activates the methylesterase activity.

The protein localises to the cytoplasm. It carries out the reaction [protein]-L-glutamate 5-O-methyl ester + H2O = L-glutamyl-[protein] + methanol + H(+). The catalysed reaction is L-glutaminyl-[protein] + H2O = L-glutamyl-[protein] + NH4(+). Its function is as follows. Involved in chemotaxis. Part of a chemotaxis signal transduction system that modulates chemotaxis in response to various stimuli. Catalyzes the demethylation of specific methylglutamate residues introduced into the chemoreceptors (methyl-accepting chemotaxis proteins or MCP) by CheR. Also mediates the irreversible deamidation of specific glutamine residues to glutamic acid. This is Protein-glutamate methylesterase/protein-glutamine glutaminase 1 from Oleidesulfovibrio alaskensis (strain ATCC BAA-1058 / DSM 17464 / G20) (Desulfovibrio alaskensis).